The chain runs to 311 residues: HPr kinase/phosphorylase (311 aa).

Residues His139 and Lys160 contribute to the active site. 154-161 (GESGVGKS) provides a ligand contact to ATP. Ser161 contacts Mg(2+). Asp178 acts as the Proton acceptor; for phosphorylation activity. Proton donor; for dephosphorylation activity in catalysis. The segment at 202–211 (IEIRGIGILD) is important for the catalytic mechanism of both phosphorylation and dephosphorylation. Mg(2+) is bound at residue Glu203. The active site involves Arg244. An important for the catalytic mechanism of dephosphorylation region spans residues 265-270 (PVRPGR).

Belongs to the HPrK/P family. As to quaternary structure, homohexamer. Mg(2+) serves as cofactor.

The catalysed reaction is [HPr protein]-L-serine + ATP = [HPr protein]-O-phospho-L-serine + ADP + H(+). It catalyses the reaction [HPr protein]-O-phospho-L-serine + phosphate + H(+) = [HPr protein]-L-serine + diphosphate. Catalyzes the ATP- as well as the pyrophosphate-dependent phosphorylation of a specific serine residue in HPr, a phosphocarrier protein of the phosphoenolpyruvate-dependent sugar phosphotransferase system (PTS). HprK/P also catalyzes the pyrophosphate-producing, inorganic phosphate-dependent dephosphorylation (phosphorolysis) of seryl-phosphorylated HPr (P-Ser-HPr). The two antagonistic activities of HprK/P are regulated by several intracellular metabolites, which change their concentration in response to the absence or presence of rapidly metabolisable carbon sources (glucose, fructose, etc.) in the growth medium. Therefore, by controlling the phosphorylation state of HPr, HPrK/P is a sensor enzyme that plays a major role in the regulation of carbon metabolism and sugar transport: it mediates carbon catabolite repression (CCR), and regulates PTS-catalyzed carbohydrate uptake and inducer exclusion. This Caldicellulosiruptor bescii (strain ATCC BAA-1888 / DSM 6725 / KCTC 15123 / Z-1320) (Anaerocellum thermophilum) protein is HPr kinase/phosphorylase.